Consider the following 540-residue polypeptide: CBL-interacting protein kinase 12 (540 aa).

The segment at 1–23 (MLMATVSPARREPTPQAVRASPM) is disordered. Residues 46-300 (YELGRVLGQG…VPEIIESDWF (255 aa)) form the Protein kinase domain. ATP contacts are provided by residues 52-60 (LGQGSFAKV) and Lys75. Asp168 functions as the Proton acceptor in the catalytic mechanism. Residues 186–215 (DFGLAAGPDQFDPDGLLHTFCGTPAYVAPE) are activation loop. A compositionally biased stretch (pro residues) spans 333–348 (PPPLGLAPPVPPPPQG). The disordered stretch occupies residues 333-380 (PPPLGLAPPVPPPPQGDDPDGSGSESDSSVVSCPATLSTGESQRVRGS). Residues 353 to 364 (GSGSESDSSVVS) are compositionally biased toward low complexity. The NAF domain maps to 370–406 (STGESQRVRGSLPRPASLNAFDIISFSKGFNLSGLFE). The segment at 409-438 (GNEIRFVSGEPMSDIVKKLEEIAKVKSFTV) is PPI.

The protein belongs to the protein kinase superfamily. CAMK Ser/Thr protein kinase family. SNF1 subfamily. The cofactor is Mg(2+). In terms of processing, autophosphorylated. Expressed at low levels in leaf blades.

It catalyses the reaction L-seryl-[protein] + ATP = O-phospho-L-seryl-[protein] + ADP + H(+). The catalysed reaction is L-threonyl-[protein] + ATP = O-phospho-L-threonyl-[protein] + ADP + H(+). In terms of biological role, involved in drought stress tolerance. CIPK serine-threonine protein kinases interact with CBL proteins. Binding of a CBL protein to the regulatory NAF domain of CIPK protein lead to the activation of the kinase in a calcium-dependent manner. The sequence is that of CBL-interacting protein kinase 12 (CIPK12) from Oryza sativa subsp. japonica (Rice).